A 545-amino-acid chain; its full sequence is Chaperonin GroEL (545 aa).

ATP contacts are provided by residues 30–33 (TLGP), Lys-51, 87–91 (DGTTT), Gly-415, and Asp-495.

It belongs to the chaperonin (HSP60) family. Forms a cylinder of 14 subunits composed of two heptameric rings stacked back-to-back. Interacts with the co-chaperonin GroES.

Its subcellular location is the cytoplasm. The enzyme catalyses ATP + H2O + a folded polypeptide = ADP + phosphate + an unfolded polypeptide.. Functionally, together with its co-chaperonin GroES, plays an essential role in assisting protein folding. The GroEL-GroES system forms a nano-cage that allows encapsulation of the non-native substrate proteins and provides a physical environment optimized to promote and accelerate protein folding. This chain is Chaperonin GroEL, found in Yersinia pestis bv. Antiqua (strain Antiqua).